The sequence spans 335 residues: MINSDNQKFSKIRFDWARDEILEILNYPLVDLMWEAQIIHRRFNEYKVQLASLFSVKTGGCEENCSYCSQSIYSSSQIKSHPQFEVEAVLNRAKTAKKEGADRFCMGWAWREIRDGKPFNSMLEMVKGVKELGMEACVTAGMLTDEQALRLADAGLTAYNHNLDTSPEYYKNIITTRTYQDRLETIKRVRNAGINVCCGGIIGLGENNGDRASLLEVLSNMNPHPESVPINSLVAIEGTGLEEKKEIDSIEMIRMIATARILMPKSKIRLSAGREKLTKEAQIICFQCGANSIFYGDELLTTSNPSFQDDRKLLKDVGVLFNKDFEYCDKTVSTV.

One can recognise a Radical SAM core domain in the interval 46–274; it reads YKVQLASLFS…KSKIRLSAGR (229 aa). [4Fe-4S] cluster contacts are provided by cysteine 61, cysteine 65, and cysteine 68. Cysteine 105, cysteine 137, cysteine 197, and arginine 269 together coordinate [2Fe-2S] cluster.

This sequence belongs to the radical SAM superfamily. Biotin synthase family. As to quaternary structure, homodimer. Requires [4Fe-4S] cluster as cofactor. [2Fe-2S] cluster serves as cofactor.

It catalyses the reaction (4R,5S)-dethiobiotin + (sulfur carrier)-SH + 2 reduced [2Fe-2S]-[ferredoxin] + 2 S-adenosyl-L-methionine = (sulfur carrier)-H + biotin + 2 5'-deoxyadenosine + 2 L-methionine + 2 oxidized [2Fe-2S]-[ferredoxin]. It participates in cofactor biosynthesis; biotin biosynthesis; biotin from 7,8-diaminononanoate: step 2/2. In terms of biological role, catalyzes the conversion of dethiobiotin (DTB) to biotin by the insertion of a sulfur atom into dethiobiotin via a radical-based mechanism. In Prochlorococcus marinus (strain MIT 9515), this protein is Biotin synthase.